A 121-amino-acid chain; its full sequence is Large ribosomal subunit protein uL18 (121 aa).

Basic residues predominate over residues 1–22 (MIKKPDKKTLRQGKHKRVRRKV). The disordered stretch occupies residues 1 to 23 (MIKKPDKKTLRQGKHKRVRRKVA).

The protein belongs to the universal ribosomal protein uL18 family. As to quaternary structure, part of the 50S ribosomal subunit; part of the 5S rRNA/L5/L18/L25 subcomplex. Contacts the 5S and 23S rRNAs.

Functionally, this is one of the proteins that bind and probably mediate the attachment of the 5S RNA into the large ribosomal subunit, where it forms part of the central protuberance. The chain is Large ribosomal subunit protein uL18 from Syntrophomonas wolfei subsp. wolfei (strain DSM 2245B / Goettingen).